The chain runs to 83 residues: Defensin-like protein 47 (83 aa).

Positions 1–27 (MGSTKTLVTCFLVIILAVSLPNNNVLA) are cleaved as a signal peptide. 4 disulfide bridges follow: Cys40-Cys81, Cys44-Cys68, Cys53-Cys79, and Cys57-Cys80.

It belongs to the DEFL family.

It is found in the secreted. In Arabidopsis thaliana (Mouse-ear cress), this protein is Defensin-like protein 47.